Reading from the N-terminus, the 63-residue chain is Large ribosomal subunit protein uL29 (63 aa).

The protein belongs to the universal ribosomal protein uL29 family.

In Haemophilus influenzae (strain 86-028NP), this protein is Large ribosomal subunit protein uL29.